Here is a 423-residue protein sequence, read N- to C-terminus: Phosphoribosylamine--glycine ligase (423 aa).

Residues 107–312 (KDLCARYGIP…LLPLLYAAAT (206 aa)) enclose the ATP-grasp domain. Position 133–193 (133–193 (IREEGAPIVI…EAYLDGEEAS (61 aa))) interacts with ATP. 2 residues coordinate Mg(2+): Glu282 and Asn284.

It belongs to the GARS family. The cofactor is Mg(2+). It depends on Mn(2+) as a cofactor.

It catalyses the reaction 5-phospho-beta-D-ribosylamine + glycine + ATP = N(1)-(5-phospho-beta-D-ribosyl)glycinamide + ADP + phosphate + H(+). It participates in purine metabolism; IMP biosynthesis via de novo pathway; N(1)-(5-phospho-D-ribosyl)glycinamide from 5-phospho-alpha-D-ribose 1-diphosphate: step 2/2. The polypeptide is Phosphoribosylamine--glycine ligase (Rhizobium meliloti (strain 1021) (Ensifer meliloti)).